Consider the following 567-residue polypeptide: Low-affinity glucose transporter HXT3 (567 aa).

Residues methionine 1–methionine 29 show a composition bias toward polar residues. Residues methionine 1–asparagine 30 form a disordered region. The Cytoplasmic segment spans residues methionine 1–glycine 57. The residue at position 23 (serine 23) is a Phosphoserine. The helical transmembrane segment at alanine 58–tryptophan 78 threads the bilayer. Over aspartate 79–glycine 113 the chain is Extracellular. A helical membrane pass occupies residues leucine 114–glycine 134. Topologically, residues aspartate 135–lysine 140 are cytoplasmic. A helical membrane pass occupies residues methionine 141–isoleucine 161. Residues asparagine 162 to arginine 171 are Extracellular-facing. A helical membrane pass occupies residues isoleucine 172–valine 192. The Cytoplasmic segment spans residues alanine 193–arginine 198. The helical transmembrane segment at glycine 199 to threonine 219 threads the bilayer. Residues asparagine 220–arginine 233 are Extracellular-facing. Asparagine 225 is a glycosylation site (N-linked (GlcNAc...) asparagine). The chain crosses the membrane as a helical span at residues valine 234–proline 254. Residues glutamate 255–aspartate 337 lie on the Cytoplasmic side of the membrane. A helical transmembrane segment spans residues asparagine 338–serine 354. The Extracellular segment spans residues aspartate 355 to serine 360. A helical transmembrane segment spans residues isoleucine 361–valine 378. The Cytoplasmic segment spans residues aspartate 379–asparagine 385. A helical membrane pass occupies residues cysteine 386–valine 406. Residues threonine 407–valine 428 are Extracellular-facing. An N-linked (GlcNAc...) asparagine glycan is attached at asparagine 416. Residues phenylalanine 429–isoleucine 449 traverse the membrane as a helical segment. Over serine 450–threonine 466 the chain is Cytoplasmic. A helical membrane pass occupies residues alanine 467–isoleucine 487. Residue asparagine 488 is a topological domain, extracellular. A helical transmembrane segment spans residues phenylalanine 489–phenylalanine 509. Residues valine 510–lysine 567 lie on the Cytoplasmic side of the membrane.

Belongs to the major facilitator superfamily. Sugar transporter (TC 2.A.1.1) family.

It is found in the membrane. Functionally, low-affinity glucose transporter. This chain is Low-affinity glucose transporter HXT3 (HXT3), found in Saccharomyces cerevisiae (strain ATCC 204508 / S288c) (Baker's yeast).